Consider the following 301-residue polypeptide: uncharacterized protein (301 aa).

Transmembrane regions (helical) follow at residues 1–21 (MSWI…LRII), 33–53 (SVLF…YVYY), 72–92 (AMSL…KIPW), 101–121 (FGII…IILI), 124–144 (FAWL…KTFY), 194–214 (VLIE…IFAI), 220–240 (IIYT…FCLA), 253–273 (LALI…IAIP), and 274–294 (EYVA…ASII).

The protein belongs to the TerC family.

It localises to the cell membrane. This is an uncharacterized protein from Rickettsia conorii (strain ATCC VR-613 / Malish 7).